The following is a 60-amino-acid chain: Large ribosomal subunit protein uL30 (60 aa).

Belongs to the universal ribosomal protein uL30 family. Part of the 50S ribosomal subunit.

The protein is Large ribosomal subunit protein uL30 of Leuconostoc citreum (strain KM20).